Here is a 457-residue protein sequence, read N- to C-terminus: Cell division cycle 20.1, cofactor of APC complex (457 aa).

WD repeat units follow at residues Val138–Leu175, Glu180–Thr219, Gly223–Glu260, Gly264–Thr303, Glu312–Ser354, Asp356–Glu397, and Gly400–Lys439.

It belongs to the WD repeat CDC20/Fizzy family. As to quaternary structure, the APC/C is composed of at least 11 subunits that stay tightly associated throughout the cell cycle. Interacts with APC10, FZR1, FZR2, FZR3. Binds to GIG1 and PYM. Part of the mitotic checkpoint complex (MCC); interacts with MAD2, BUB3.1, BUBR1 and BUB1. Binds to cyclins CYCA1-2, CYCB2-1 and CYCB2-2. Interacts with PANS1. Expressed in meristems and organ primordia. Present in flowers, leaves, stems, roots, pollen grains and developing seeds.

It localises to the nucleus. Its pathway is protein modification; protein ubiquitination. In terms of biological role, component of the anaphase promoting complex/cyclosome (APC/C), a cell cycle-regulated E3 ubiquitin-protein ligase complex that controls progression through mitosis and the G1 phase of the cell cycle. The protein is Cell division cycle 20.1, cofactor of APC complex (CDC20-1) of Arabidopsis thaliana (Mouse-ear cress).